Consider the following 171-residue polypeptide: Shikimate kinase (171 aa).

Glycine 13–threonine 18 contributes to the ATP binding site. Serine 17 is a Mg(2+) binding site. Substrate contacts are provided by aspartate 35, arginine 59, and glycine 81. Arginine 118 is an ATP binding site. Arginine 136 contacts substrate. Arginine 153 lines the ATP pocket.

The protein belongs to the shikimate kinase family. In terms of assembly, monomer. The cofactor is Mg(2+).

The protein localises to the cytoplasm. The catalysed reaction is shikimate + ATP = 3-phosphoshikimate + ADP + H(+). Its pathway is metabolic intermediate biosynthesis; chorismate biosynthesis; chorismate from D-erythrose 4-phosphate and phosphoenolpyruvate: step 5/7. Functionally, catalyzes the specific phosphorylation of the 3-hydroxyl group of shikimic acid using ATP as a cosubstrate. This Streptomyces avermitilis (strain ATCC 31267 / DSM 46492 / JCM 5070 / NBRC 14893 / NCIMB 12804 / NRRL 8165 / MA-4680) protein is Shikimate kinase.